A 191-amino-acid chain; its full sequence is Pyridoxal 5'-phosphate synthase subunit PdxT (191 aa).

Position 48–50 (48–50 (GES)) interacts with L-glutamine. Cys79 functions as the Nucleophile in the catalytic mechanism. L-glutamine-binding positions include Arg106 and 134-135 (IR). Active-site charge relay system residues include His170 and Glu172.

This sequence belongs to the glutaminase PdxT/SNO family. In the presence of PdxS, forms a dodecamer of heterodimers. Only shows activity in the heterodimer.

The enzyme catalyses aldehydo-D-ribose 5-phosphate + D-glyceraldehyde 3-phosphate + L-glutamine = pyridoxal 5'-phosphate + L-glutamate + phosphate + 3 H2O + H(+). It carries out the reaction L-glutamine + H2O = L-glutamate + NH4(+). Its pathway is cofactor biosynthesis; pyridoxal 5'-phosphate biosynthesis. Its function is as follows. Catalyzes the hydrolysis of glutamine to glutamate and ammonia as part of the biosynthesis of pyridoxal 5'-phosphate. The resulting ammonia molecule is channeled to the active site of PdxS. This chain is Pyridoxal 5'-phosphate synthase subunit PdxT, found in Oenococcus oeni (strain ATCC BAA-331 / PSU-1).